The following is a 390-amino-acid chain: Guanine nucleotide-binding protein alpha-7 subunit (390 aa).

Composition is skewed to low complexity over residues methionine 1–threonine 12 and serine 22–serine 42. A disordered region spans residues methionine 1–serine 42. In terms of domain architecture, G-alpha spans serine 70 to isoleucine 390. Residues lysine 73 to threonine 86 form a G1 motif region. Residues glycine 78–serine 85, leucine 213–serine 219, aspartate 238–glutamine 242, asparagine 307–aspartate 310, and alanine 363 each bind GTP. Serine 85 serves as a coordination point for Mg(2+). The interval aspartate 211 to serine 219 is G2 motif. Positions phenylalanine 234 to arginine 243 are G3 motif. Residues isoleucine 303–aspartate 310 form a G4 motif region. Residues threonine 361–threonine 366 are G5 motif.

Belongs to the G-alpha family. In terms of assembly, g proteins are composed of 3 units; alpha, beta and gamma. The alpha chain contains the guanine nucleotide binding site.

Guanine nucleotide-binding proteins (G proteins) are involved as modulators or transducers in various transmembrane signaling systems. This chain is Guanine nucleotide-binding protein alpha-7 subunit (gpaG), found in Dictyostelium discoideum (Social amoeba).